The primary structure comprises 114 residues: T cell receptor beta variable 27 (114 aa).

Residues 1 to 21 (MGPQLLGYVVLCLLGAGPLEA) form the signal peptide. One can recognise an Ig-like domain in the interval 22–114 (QVTQNPRYLI…TSLYFCASSL (93 aa)). Cysteine 42 and cysteine 110 are joined by a disulfide. Asparagine 103 carries N-linked (GlcNAc...) asparagine glycosylation.

In terms of assembly, alpha-beta TR is a heterodimer composed of an alpha and beta chain; disulfide-linked. The alpha-beta TR is associated with the transmembrane signaling CD3 coreceptor proteins to form the TR-CD3 (TcR or TCR). The assembly of alpha-beta TR heterodimers with CD3 occurs in the endoplasmic reticulum where a single alpha-beta TR heterodimer associates with one CD3D-CD3E heterodimer, one CD3G-CD3E heterodimer and one CD247 homodimer forming a stable octameric structure. CD3D-CD3E and CD3G-CD3E heterodimers preferentially associate with TR alpha and TR beta chains, respectively. The association of the CD247 homodimer is the last step of TcR assembly in the endoplasmic reticulum and is required for transport to the cell surface.

The protein resides in the cell membrane. V region of the variable domain of T cell receptor (TR) beta chain that participates in the antigen recognition. Alpha-beta T cell receptors are antigen specific receptors which are essential to the immune response and are present on the cell surface of T lymphocytes. Recognize peptide-major histocompatibility (MH) (pMH) complexes that are displayed by antigen presenting cells (APC), a prerequisite for efficient T cell adaptive immunity against pathogens. Binding of alpha-beta TR to pMH complex initiates TR-CD3 clustering on the cell surface and intracellular activation of LCK that phosphorylates the ITAM motifs of CD3G, CD3D, CD3E and CD247 enabling the recruitment of ZAP70. In turn ZAP70 phosphorylates LAT, which recruits numerous signaling molecules to form the LAT signalosome. The LAT signalosome propagates signal branching to three major signaling pathways, the calcium, the mitogen-activated protein kinase (MAPK) kinase and the nuclear factor NF-kappa-B (NF-kB) pathways, leading to the mobilization of transcription factors that are critical for gene expression and essential for T cell growth and differentiation. The T cell repertoire is generated in the thymus, by V-(D)-J rearrangement. This repertoire is then shaped by intrathymic selection events to generate a peripheral T cell pool of self-MH restricted, non-autoaggressive T cells. Post-thymic interaction of alpha-beta TR with the pMH complexes shapes TR structural and functional avidity. The protein is T cell receptor beta variable 27 of Homo sapiens (Human).